A 792-amino-acid polypeptide reads, in one-letter code: X-ray radiation resistance-associated protein 1 (792 aa).

LRR repeat units lie at residues Asp-104–Asn-125, Ala-141–Ile-155, Leu-164–Gly-184, His-188–Ala-209, Ala-229–Ala-250, and Arg-254–Gln-275. Disordered stretches follow at residues Ala-490–Cys-517, Thr-537–Glu-562, and Ile-577–Gly-601. A compositionally biased stretch (basic and acidic residues) spans Ser-549–Ser-560. Residues His-723–Ser-745 are a coiled coil.

In terms of tissue distribution, expressed predominantly in testis followed by prostate and ovary. Low levels found in other tissues including peripheral blood leukocytes, spleen, thymus, small intestine and colon. Also expressed in neuroblastoma, glioma, breast, lung, leukemia, renal, ovarian, prostate and colorectal cancer cell lines.

Its subcellular location is the cytoplasm. The protein localises to the nucleus. Functionally, may be involved in the response of cells to X-ray radiation. The chain is X-ray radiation resistance-associated protein 1 from Homo sapiens (Human).